Consider the following 193-residue polypeptide: FMN-dependent NADH:quinone oxidoreductase (193 aa).

FMN-binding positions include Ser-9, 15–17, and 137–140; these read SSS and TSGG.

Belongs to the azoreductase type 1 family. In terms of assembly, homodimer. The cofactor is FMN.

It catalyses the reaction 2 a quinone + NADH + H(+) = 2 a 1,4-benzosemiquinone + NAD(+). It carries out the reaction N,N-dimethyl-1,4-phenylenediamine + anthranilate + 2 NAD(+) = 2-(4-dimethylaminophenyl)diazenylbenzoate + 2 NADH + 2 H(+). Its function is as follows. Quinone reductase that provides resistance to thiol-specific stress caused by electrophilic quinones. Also exhibits azoreductase activity. Catalyzes the reductive cleavage of the azo bond in aromatic azo compounds to the corresponding amines. The sequence is that of FMN-dependent NADH:quinone oxidoreductase from Pelagibacter ubique (strain HTCC1062).